A 141-amino-acid chain; its full sequence is Putative pre-16S rRNA nuclease (141 aa).

This sequence belongs to the YqgF nuclease family.

It is found in the cytoplasm. Its function is as follows. Could be a nuclease involved in processing of the 5'-end of pre-16S rRNA. The protein is Putative pre-16S rRNA nuclease of Aliivibrio salmonicida (strain LFI1238) (Vibrio salmonicida (strain LFI1238)).